A 535-amino-acid polypeptide reads, in one-letter code: Methylmalonate-semialdehyde/malonate-semialdehyde dehydrogenase [acylating], mitochondrial (535 aa).

Residues 1-33 constitute a mitochondrion transit peptide; the sequence is MAALLAAAAVRARILQVSSKVKSSPTWYSASSF. An N6-acetyllysine; alternate mark is found at K47, K52, K55, and K76. 4 positions are modified to N6-succinyllysine; alternate: K47, K52, K55, and K76. The residue at position 87 (K87) is an N6-acetyllysine. 2 positions are modified to N6-acetyllysine; alternate: K117 and K129. N6-succinyllysine; alternate is present on residues K117 and K129. NAD(+) is bound by residues A183, F185, K209, E212, R213, and S262. S262 carries the post-translational modification Phosphoserine. N6-acetyllysine is present on K298. Residue C317 is the Nucleophile of the active site. Residues K330 and K331 each carry the N6-acetyllysine modification. Residues K364 and K376 each carry the N6-acetyllysine; alternate modification. N6-succinyllysine; alternate is present on residues K364 and K376. At S380 the chain carries Phosphoserine. K391 carries the N6-succinyllysine modification. E417 serves as a coordination point for NAD(+). An N6-acetyllysine modification is found at K500. An N6-succinyllysine modification is found at K517.

The protein belongs to the aldehyde dehydrogenase family. Homotetramer.

The protein localises to the mitochondrion. The catalysed reaction is 3-oxopropanoate + NAD(+) + CoA + H2O = hydrogencarbonate + acetyl-CoA + NADH + H(+). It catalyses the reaction 2-methyl-3-oxopropanoate + NAD(+) + CoA + H2O = propanoyl-CoA + hydrogencarbonate + NADH + H(+). It carries out the reaction (R)-2-methyl-3-oxopropanoate + NAD(+) + CoA + H2O = propanoyl-CoA + hydrogencarbonate + NADH + H(+). The enzyme catalyses (S)-2-methyl-3-oxopropanoate + NAD(+) + CoA + H2O = propanoyl-CoA + hydrogencarbonate + NADH + H(+). Its function is as follows. Malonate and methylmalonate semialdehyde dehydrogenase involved in the catabolism of valine, thymine, and compounds catabolized by way of beta-alanine, including uracil and cytidine. This is Methylmalonate-semialdehyde/malonate-semialdehyde dehydrogenase [acylating], mitochondrial from Homo sapiens (Human).